Here is a 1234-residue protein sequence, read N- to C-terminus: MVRPVQAGSRTRMSFAKIDEVLEIPDLIEVQKKSYQWFLEEGLKEVFQEISPIESFTGNLALEFVDYRLENNPKYSVEECKDRDTTYAAPLKVKVRLTNRETGEIKESEVFMGDLPLMTDKGTFIINGAERVIVSQLVRSPGVYYDQQFDKFGKKLIFATVIPNRGAWLEYEEDSNDVIYVRIDRTRKVPITVLLRAIGYNTDIQILDLLGEEEKLKATLDKDTTKSEEEALIEIYKRLRPGEPPTVESARSLFNALFFDPKRYDLAKVGRYKFNKKLALKARIANHKSAKRIVNPITGEVLVEEGEKITREKAEEIQNCGINEVEILVDGKVVKVVGNNTVDINKYPMPYDVSSLNIKELVNVRVLREILDNFSDEEAVLNEIKNRMDELVPKHITKDDIVATISYQLNLTHGVGFVDDIDHLGNRRVRSVGELLQNQFRIGLARLERVVKERMTIQDVNEVTPQNLINIRPVVAAIREFFGSSQLSQFMDQTNPLSELTHKRRVSALGPGGLSRERAGFEVRDVHYSHYGRICPIETPEGPNIGLITSLTTYARVNEYGFIETPYRKVDKATGTVTDEIVYMTADEEDEYIIAQANEPLDENNRFINDRVVCRLREEIISVPPTEVDFMDVSPKQIVSVSASLIPFLENDDANRALMGSNMQRQAVPLLKPEAPIVGTGMEYKAAVDSGAVILAKNDGIVEKVTADKVVIRTKDGKRDEYHLLKFKRSNQGTCINQRPIVNEGDEVKKGQVICDGPSTDHGELALGKNVLVGFMPWEGYNYEDAILISEELVMDDSLTSIHIEEYDAEARDTKLGPEEITREIPNVGEDALKDLDERGIIRIGAEVRAGDILVGKVTPKGETELTAEERLLRAIFGEKAREVRDTSLRVPHGESGIVVDVKVYSRENGDELPPGVNQMVRVFVAQKRKISVGDKMAGRHGNKGVISRILPVEDMPFLPDGTPLQICLNPLGVPSRMNIGQVLETHLGLVAKALGWYIASPVFDGATEKDIEELLAKSGFSPDGKVQLYDGRTGEPFDNKVTVGYMYMLKLHHLVDDKMHARSTGPYSLVTQQPLGGKAQFGGQRFGEMEVWALEAYGAAHTLQEMLTVKSDDVTGRVKAYEAIVKGENIPEPGIPESFKVLVKELQSLALDVKVITEDGQEIPIKEFEDDDDDVPDATLNINIEGREDAPPEEVYEEEYEEEPEELPEDIDFEPDNFDIDSEDLFMDDDYDG.

The tract at residues 1187–1234 (GREDAPPEEVYEEEYEEEPEELPEDIDFEPDNFDIDSEDLFMDDDYDG) is disordered. The segment covering 1192-1234 (PPEEVYEEEYEEEPEELPEDIDFEPDNFDIDSEDLFMDDDYDG) has biased composition (acidic residues).

It belongs to the RNA polymerase beta chain family. As to quaternary structure, the RNAP catalytic core consists of 2 alpha, 1 beta, 1 beta' and 1 omega subunit. When a sigma factor is associated with the core the holoenzyme is formed, which can initiate transcription.

It catalyses the reaction RNA(n) + a ribonucleoside 5'-triphosphate = RNA(n+1) + diphosphate. Its function is as follows. DNA-dependent RNA polymerase catalyzes the transcription of DNA into RNA using the four ribonucleoside triphosphates as substrates. In Caldanaerobacter subterraneus subsp. tengcongensis (strain DSM 15242 / JCM 11007 / NBRC 100824 / MB4) (Thermoanaerobacter tengcongensis), this protein is DNA-directed RNA polymerase subunit beta.